A 120-amino-acid chain; its full sequence is NAD(P)H-quinone oxidoreductase subunit 3 (120 aa).

Helical transmembrane passes span 6–26 (GYDA…LALV), 64–84 (MFAL…PWAV), and 89–109 (LGLL…VALA).

This sequence belongs to the complex I subunit 3 family. As to quaternary structure, NDH-1 can be composed of about 15 different subunits; different subcomplexes with different compositions have been identified which probably have different functions.

The protein localises to the cellular thylakoid membrane. The enzyme catalyses a plastoquinone + NADH + (n+1) H(+)(in) = a plastoquinol + NAD(+) + n H(+)(out). It carries out the reaction a plastoquinone + NADPH + (n+1) H(+)(in) = a plastoquinol + NADP(+) + n H(+)(out). Its function is as follows. NDH-1 shuttles electrons from an unknown electron donor, via FMN and iron-sulfur (Fe-S) centers, to quinones in the respiratory and/or the photosynthetic chain. The immediate electron acceptor for the enzyme in this species is believed to be plastoquinone. Couples the redox reaction to proton translocation, and thus conserves the redox energy in a proton gradient. Cyanobacterial NDH-1 also plays a role in inorganic carbon-concentration. The polypeptide is NAD(P)H-quinone oxidoreductase subunit 3 (Synechococcus sp. (strain CC9902)).